A 640-amino-acid polypeptide reads, in one-letter code: Protein UL35 (640 aa).

3 disordered regions span residues 353 to 373, 500 to 571, and 586 to 640; these read ERGE…PREA, ASSS…PRQR, and AYSH…LRHL. Residues 358-367 show a composition bias toward acidic residues; that stretch reads GDEDEEQEND. Low complexity predominate over residues 500 to 562; it reads ASSSSASSSS…LSGSHGISSA (63 aa). Over residues 588-598 the composition is skewed to basic residues; the sequence is SHHRRHRRRRS. Basic and acidic residues predominate over residues 631–640; it reads DDLAENLRHL.

This sequence belongs to the herpesviridae pp85 family. In terms of assembly, interacts with UL82. Interacts with isoform UL35A. Interacts with host UBP7; this interaction significantly inhibits the ability of USP7 to form nuclear bodies. Interacts with host DCAF1 (via C-terminus). Interacts with host SNX5; this interaction allows proper gB localization during viral assembly. Interacts with host TBK1; this interaction prevents type I interferon production. As to quaternary structure, interacts with UL82. Interacts with isoform UL35. Interacts with host UBP7; this interaction significantly inhibits the ability of USP7 to form nuclear bodies. Interacts with host SNX5; this interaction allows proper gB localization during viral assembly.

It localises to the virion tegument. The protein localises to the host nucleus. It is found in the host cytoplasm. Plays important role in immediate-early gene expression through interaction with UL82. Forms nuclear bodies in host nucleus, independently of PML. In turn, UL35 nuclear bodies associate with and remodel PML bodies. Through interaction with host DCAF1, causes cells to accumulate in the G2 phase of the cell cycle by inducing a DNA damage response. Regulates viral assembly by controlling the localization of the essential gB through regulation of a retrograde transport pathway. This modulation occurs via binding and inhibition of host sorting nexin 5/SNX5. Also plays a role in the inhibition of pattern recognition receptor-mediated type I interferon signaling at the level of TBK1. In terms of biological role, promotes cytoplasmic UL82 accumulation and inhibits UL35-containing nuclear bodies formation. Regulates viral assembly by controlling the localization of the essential gB through regulation of a retrograde transport pathway. This modulation occurs via binding and inhibition of host sorting nexin 5/SNX5. The chain is Protein UL35 (UL35) from Homo sapiens (Human).